A 650-amino-acid chain; its full sequence is MEDNNKTQAYDSSSIKILEGLEAVRKRPGMYIGSTGEEGLHHMIWEIIDNSIDEAMGGFASTVKLTLKDNFVTIVEDDGRGIPVDIHPKTNRSTVETVFTVLHAGGKFDNDSYKVSGGLHGVGASVVNALSSSFKVWVAREHQQYFLAFHNGGEVIGDLVNEGKCDKEHGTKVEFVPDFTVMEKSDYKQTVIASRLQQLAFLNKGIQIDFVDERRQNPQSFSWKYDGGLVQYIHHLNNEKEPLFEDIIFGEKTDTVKSVSRDESYTIKVEVAFQYNKTYNQSIFSFCNNINTTEGGTHVEGFRNALVKIINRFAVENKFLKETDEKITRDDICEGLTAIISIKHPNPQYEGQTKKKLGNTEVRPLVNSIVSEIFERFMLENPQEANAIIRKTLLAQEARRRSQEARELTRRKSPFDSGSLPGKLADCTTRDPSISELYIVEGDSAGGTAKTGRDRYFQAILPLRGKILNVEKSHFEQIFNNVEISALVMAVGCGIKPDFELEKLRYNKIIIMTDADVDGAHIRTLLLTFFFRFMYPLVEQGNIYIAQPPLYKVSYSNKDLYMQTDVQLEEWKQQHPNLKYNLQRYKGLGEMDAIQLWETTMDPKVRTLLKVTVEDASIADKAFSLLMGDEVPPRREFIEQNARNVKNIDI.

Basic and acidic residues predominate over residues 400–414 (RRSQEARELTRRKSP). The tract at residues 400-422 (RRSQEARELTRRKSPFDSGSLPG) is disordered. Residues 435–549 (SELYIVEGDS…QGNIYIAQPP (115 aa)) enclose the Toprim domain. 3 residues coordinate Mg(2+): Glu441, Asp514, and Asp516.

Belongs to the type II topoisomerase GyrB family. As to quaternary structure, heterotetramer, composed of two GyrA and two GyrB chains. In the heterotetramer, GyrA contains the active site tyrosine that forms a transient covalent intermediate with DNA, while GyrB binds cofactors and catalyzes ATP hydrolysis. Mg(2+) serves as cofactor. Requires Mn(2+) as cofactor. Ca(2+) is required as a cofactor.

Its subcellular location is the cytoplasm. It catalyses the reaction ATP-dependent breakage, passage and rejoining of double-stranded DNA.. A type II topoisomerase that negatively supercoils closed circular double-stranded (ds) DNA in an ATP-dependent manner to modulate DNA topology and maintain chromosomes in an underwound state. Negative supercoiling favors strand separation, and DNA replication, transcription, recombination and repair, all of which involve strand separation. Also able to catalyze the interconversion of other topological isomers of dsDNA rings, including catenanes and knotted rings. Type II topoisomerases break and join 2 DNA strands simultaneously in an ATP-dependent manner. This is DNA gyrase subunit B from Mycoplasma pneumoniae (strain ATCC 29342 / M129 / Subtype 1) (Mycoplasmoides pneumoniae).